The chain runs to 155 residues: 6,7-dimethyl-8-ribityllumazine synthase (155 aa).

Residues Trp23, 57 to 59 (AWE), and 81 to 83 (CVI) contribute to the 5-amino-6-(D-ribitylamino)uracil site. 86 to 87 (DT) is a binding site for (2S)-2-hydroxy-3-oxobutyl phosphate. Residue His89 is the Proton donor of the active site. Residue Asn114 participates in 5-amino-6-(D-ribitylamino)uracil binding. (2S)-2-hydroxy-3-oxobutyl phosphate is bound at residue Arg128.

The protein belongs to the DMRL synthase family. In terms of assembly, forms an icosahedral capsid composed of 60 subunits, arranged as a dodecamer of pentamers.

It catalyses the reaction (2S)-2-hydroxy-3-oxobutyl phosphate + 5-amino-6-(D-ribitylamino)uracil = 6,7-dimethyl-8-(1-D-ribityl)lumazine + phosphate + 2 H2O + H(+). Its pathway is cofactor biosynthesis; riboflavin biosynthesis; riboflavin from 2-hydroxy-3-oxobutyl phosphate and 5-amino-6-(D-ribitylamino)uracil: step 1/2. Catalyzes the formation of 6,7-dimethyl-8-ribityllumazine by condensation of 5-amino-6-(D-ribitylamino)uracil with 3,4-dihydroxy-2-butanone 4-phosphate. This is the penultimate step in the biosynthesis of riboflavin. In Stenotrophomonas maltophilia (strain R551-3), this protein is 6,7-dimethyl-8-ribityllumazine synthase.